The sequence spans 208 residues: Imidazoleglycerol-phosphate dehydratase (208 aa).

It belongs to the imidazoleglycerol-phosphate dehydratase family.

The protein resides in the cytoplasm. The catalysed reaction is D-erythro-1-(imidazol-4-yl)glycerol 3-phosphate = 3-(imidazol-4-yl)-2-oxopropyl phosphate + H2O. The protein operates within amino-acid biosynthesis; L-histidine biosynthesis; L-histidine from 5-phospho-alpha-D-ribose 1-diphosphate: step 6/9. In Psychrobacter sp. (strain PRwf-1), this protein is Imidazoleglycerol-phosphate dehydratase.